Reading from the N-terminus, the 178-residue chain is Dual-action ribosomal maturation protein DarP (178 aa).

The protein belongs to the DarP family.

It localises to the cytoplasm. Its function is as follows. Member of a network of 50S ribosomal subunit biogenesis factors which assembles along the 30S-50S interface, preventing incorrect 23S rRNA structures from forming. Promotes peptidyl transferase center (PTC) maturation. The polypeptide is Dual-action ribosomal maturation protein DarP (Haemophilus influenzae (strain 86-028NP)).